We begin with the raw amino-acid sequence, 256 residues long: Glutamate racemase (256 aa).

Residues 12-13 and 44-45 contribute to the substrate site; these read DS and YG. Residue C75 is the Proton donor/acceptor of the active site. Residue 76 to 77 coordinates substrate; the sequence is NT. Residue C186 is the Proton donor/acceptor of the active site. 187 to 188 provides a ligand contact to substrate; it reads TH.

This sequence belongs to the aspartate/glutamate racemases family.

The enzyme catalyses L-glutamate = D-glutamate. The protein operates within cell wall biogenesis; peptidoglycan biosynthesis. Its function is as follows. Provides the (R)-glutamate required for cell wall biosynthesis. This is Glutamate racemase from Clostridium acetobutylicum (strain ATCC 824 / DSM 792 / JCM 1419 / IAM 19013 / LMG 5710 / NBRC 13948 / NRRL B-527 / VKM B-1787 / 2291 / W).